A 766-amino-acid chain; its full sequence is Phosphoribosylformylglycinamidine synthase subunit PurL (766 aa).

Residue His49 is part of the active site. ATP-binding residues include Tyr52 and Lys91. Glu93 lines the Mg(2+) pocket. Substrate-binding positions include 94–97 (SHNH) and Arg116. Residue His95 is the Proton acceptor of the active site. Position 117 (Asp117) interacts with Mg(2+). Gln240 lines the substrate pocket. Asp268 is a Mg(2+) binding site. 312-314 (ESQ) contributes to the substrate binding site. The ATP site is built by Asp508 and Gly545. Asn546 contributes to the Mg(2+) binding site. A substrate-binding site is contributed by Ser548.

It belongs to the FGAMS family. Monomer. Part of the FGAM synthase complex composed of 1 PurL, 1 PurQ and 2 PurS subunits.

It localises to the cytoplasm. The catalysed reaction is N(2)-formyl-N(1)-(5-phospho-beta-D-ribosyl)glycinamide + L-glutamine + ATP + H2O = 2-formamido-N(1)-(5-O-phospho-beta-D-ribosyl)acetamidine + L-glutamate + ADP + phosphate + H(+). Its pathway is purine metabolism; IMP biosynthesis via de novo pathway; 5-amino-1-(5-phospho-D-ribosyl)imidazole from N(2)-formyl-N(1)-(5-phospho-D-ribosyl)glycinamide: step 1/2. In terms of biological role, part of the phosphoribosylformylglycinamidine synthase complex involved in the purines biosynthetic pathway. Catalyzes the ATP-dependent conversion of formylglycinamide ribonucleotide (FGAR) and glutamine to yield formylglycinamidine ribonucleotide (FGAM) and glutamate. The FGAM synthase complex is composed of three subunits. PurQ produces an ammonia molecule by converting glutamine to glutamate. PurL transfers the ammonia molecule to FGAR to form FGAM in an ATP-dependent manner. PurS interacts with PurQ and PurL and is thought to assist in the transfer of the ammonia molecule from PurQ to PurL. The polypeptide is Phosphoribosylformylglycinamidine synthase subunit PurL (Synechococcus sp. (strain CC9902)).